The primary structure comprises 419 residues: Glutamate dehydrogenase (419 aa).

The active site involves K105. Residue 219-225 coordinates NAD(+); it reads GYGNAGY.

The protein belongs to the Glu/Leu/Phe/Val dehydrogenases family. As to quaternary structure, homohexamer.

It catalyses the reaction L-glutamate + NAD(+) + H2O = 2-oxoglutarate + NH4(+) + NADH + H(+). The enzyme catalyses L-glutamate + NADP(+) + H2O = 2-oxoglutarate + NH4(+) + NADPH + H(+). The sequence is that of Glutamate dehydrogenase (gdhA) from Thermococcus profundus.